The sequence spans 302 residues: Sulfate adenylyltransferase subunit 2 (302 aa).

The disordered stretch occupies residues 279 to 302; the sequence is ERQGRAIDHDSSGSMELKKRQGYF. Over residues 280–302 the composition is skewed to basic and acidic residues; the sequence is RQGRAIDHDSSGSMELKKRQGYF.

It belongs to the PAPS reductase family. CysD subfamily. In terms of assembly, heterodimer composed of CysD, the smaller subunit, and CysN.

It catalyses the reaction sulfate + ATP + H(+) = adenosine 5'-phosphosulfate + diphosphate. It participates in sulfur metabolism; hydrogen sulfide biosynthesis; sulfite from sulfate: step 1/3. Functionally, with CysN forms the ATP sulfurylase (ATPS) that catalyzes the adenylation of sulfate producing adenosine 5'-phosphosulfate (APS) and diphosphate, the first enzymatic step in sulfur assimilation pathway. APS synthesis involves the formation of a high-energy phosphoric-sulfuric acid anhydride bond driven by GTP hydrolysis by CysN coupled to ATP hydrolysis by CysD. In Aliivibrio fischeri (strain ATCC 700601 / ES114) (Vibrio fischeri), this protein is Sulfate adenylyltransferase subunit 2.